The chain runs to 150 residues: Siroheme decarboxylase NirD subunit (150 aa).

Belongs to the Ahb/Nir family. As to quaternary structure, probably forms a complex composed of NirD, NirL, NirG and NirH. All proteins are required for the total conversion of siroheme to didecarboxysiroheme.

It catalyses the reaction siroheme + 2 H(+) = 12,18-didecarboxysiroheme + 2 CO2. The protein operates within porphyrin-containing compound metabolism. Involved in heme d1 biosynthesis. Catalyzes the decarboxylation of siroheme into didecarboxysiroheme. This is Siroheme decarboxylase NirD subunit from Pseudomonas aeruginosa (strain ATCC 15692 / DSM 22644 / CIP 104116 / JCM 14847 / LMG 12228 / 1C / PRS 101 / PAO1).